A 274-amino-acid chain; its full sequence is Acetyl-coenzyme A carboxylase carboxyl transferase subunit alpha (274 aa).

The region spanning 2–250 is the CoA carboxyltransferase C-terminal domain; the sequence is NKEFIKSIVV…KKELMNAMNE (249 aa).

This sequence belongs to the AccA family. As to quaternary structure, acetyl-CoA carboxylase is a heterohexamer composed of biotin carboxyl carrier protein (AccB), biotin carboxylase (AccC) and two subunits each of ACCase subunit alpha (AccA) and ACCase subunit beta (AccD).

It is found in the cytoplasm. The catalysed reaction is N(6)-carboxybiotinyl-L-lysyl-[protein] + acetyl-CoA = N(6)-biotinyl-L-lysyl-[protein] + malonyl-CoA. Its pathway is lipid metabolism; malonyl-CoA biosynthesis; malonyl-CoA from acetyl-CoA: step 1/1. Functionally, component of the acetyl coenzyme A carboxylase (ACC) complex. First, biotin carboxylase catalyzes the carboxylation of biotin on its carrier protein (BCCP) and then the CO(2) group is transferred by the carboxyltransferase to acetyl-CoA to form malonyl-CoA. The chain is Acetyl-coenzyme A carboxylase carboxyl transferase subunit alpha from Clostridium botulinum (strain Eklund 17B / Type B).